We begin with the raw amino-acid sequence, 934 residues long: Protocadherin gamma-C3 (934 aa).

Residues 1–31 (MVPEAWRSGLVSTGRVVGVLLLLGALNKAST) form the signal peptide. Cadherin domains are found at residues 32–135 (VIHY…NPAF), 136–244 (PTQE…APVF), 245–352 (NQSL…APEI), 353–457 (TVTS…PPQS), 458–567 (SQSS…APQV), and 572–685 (PGGS…APRE). The Extracellular portion of the chain corresponds to 32 to 693 (VIHYEIPEER…REQNKNLTFY (662 aa)). 6 N-linked (GlcNAc...) asparagine glycosylation sites follow: Asn245, Asn424, Asn478, Asn550, Asn615, and Asn689. The chain crosses the membrane as a helical span at residues 694–714 (LLLSLILVSVGFVVTVFGVII). The Cytoplasmic portion of the chain corresponds to 715 to 934 (FKVYKWKQSR…KKKSGKKEKK (220 aa)). Disordered stretches follow at residues 804–843 (ESAP…WPNN) and 904–934 (ATLT…KEKK). Residues 812–843 (APPNTDWRFSQAQRPGTSGSQNGDDTGTWPNN) are compositionally biased toward polar residues. A compositionally biased stretch (basic residues) spans 924–934 (NKKKSGKKEKK).

Its subcellular location is the cell membrane. Its function is as follows. Potential calcium-dependent cell-adhesion protein. May be involved in the establishment and maintenance of specific neuronal connections in the brain. This chain is Protocadherin gamma-C3 (PCDHGC3), found in Pan troglodytes (Chimpanzee).